Consider the following 561-residue polypeptide: Urocanate hydratase (561 aa).

Residues 52–53, Gln130, 176–178, Glu196, Arg201, 242–243, 263–267, 273–274, and Tyr322 each bind NAD(+); these read GG, GMG, NA, QTSAH, and YL. The active site involves Cys410. Position 492 (Gly492) interacts with NAD(+).

This sequence belongs to the urocanase family. It depends on NAD(+) as a cofactor.

It is found in the cytoplasm. It carries out the reaction 4-imidazolone-5-propanoate = trans-urocanate + H2O. Its pathway is amino-acid degradation; L-histidine degradation into L-glutamate; N-formimidoyl-L-glutamate from L-histidine: step 2/3. Its function is as follows. Catalyzes the conversion of urocanate to 4-imidazolone-5-propionate. The sequence is that of Urocanate hydratase from Salmonella typhi.